An 85-amino-acid chain; its full sequence is Cell division topological specificity factor (85 aa).

The protein belongs to the MinE family.

In terms of biological role, prevents the cell division inhibition by proteins MinC and MinD at internal division sites while permitting inhibition at polar sites. This ensures cell division at the proper site by restricting the formation of a division septum at the midpoint of the long axis of the cell. The sequence is that of Cell division topological specificity factor from Dechloromonas aromatica (strain RCB).